A 400-amino-acid chain; its full sequence is Hyaluronidase (400 aa).

The first 19 residues, 1-19 (MQTILVLTTFLSAWFLAVG), serve as a signal peptide directing secretion. 5 cysteine pairs are disulfide-bonded: Cys-31-Cys-319, Cys-196-Cys-209, Cys-344-Cys-355, Cys-349-Cys-384, and Cys-386-Cys-395. The active-site Proton donor is the Glu-120. 2 N-linked (GlcNAc...) asparagine glycosylation sites follow: Asn-129 and Asn-166. N-linked (GlcNAc...) asparagine glycosylation is found at Asn-243 and Asn-275. In terms of domain architecture, EGF-like spans 340–396 (NVARCSKQACSGRGRCTWPKDTSVIAWKFLVEKEDYDFYLGDIECKCVEGYEGRYCE).

The protein belongs to the glycosyl hydrolase 56 family. In terms of assembly, monomer. As to expression, expressed by the venom gland.

The protein localises to the secreted. The enzyme catalyses Random hydrolysis of (1-&gt;4)-linkages between N-acetyl-beta-D-glucosamine and D-glucuronate residues in hyaluronate.. Spider venom endo-hyaluronidase that is able to degrade purified hyaluronic acid (HA) and chondroitin sulfate (CS). Has no activity on dermatan sulfate (DS) and heparan sulfate (HS). Also increases the dermonecrotic effect of the dermonecrotic toxin (AC P0CE80), when injected in rabbit skin, supporting the hypothesis that venom hyaluronidases are spreading factors. This chain is Hyaluronidase, found in Loxosceles intermedia (Brown spider).